Consider the following 234-residue polypeptide: UPF0173 metal-dependent hydrolase Atu1317 (234 aa).

This sequence belongs to the UPF0173 family.

This is UPF0173 metal-dependent hydrolase Atu1317 from Agrobacterium fabrum (strain C58 / ATCC 33970) (Agrobacterium tumefaciens (strain C58)).